The chain runs to 638 residues: Chaperone protein DnaK (638 aa).

Threonine 196 is modified (phosphothreonine; by autocatalysis). Residues 592–638 form a disordered region; that stretch reads ASNLYQQPGAEAGAAPQPETNGQQESKGGDGAVNAEYEVIDGDDDKK. Low complexity predominate over residues 597–610; the sequence is QQPGAEAGAAPQPE. Residues 629–638 are compositionally biased toward acidic residues; it reads EVIDGDDDKK.

It belongs to the heat shock protein 70 family.

Its function is as follows. Acts as a chaperone. The sequence is that of Chaperone protein DnaK from Chlorobaculum parvum (strain DSM 263 / NCIMB 8327) (Chlorobium vibrioforme subsp. thiosulfatophilum).